The following is a 299-amino-acid chain: Small ribosomal subunit protein uS3 (299 aa).

The KH type-2 domain maps to 39–107 (VREYLKAKLK…PVAVNIEEVR (69 aa)). The segment at 214–299 (PVIKTDERED…AVAPGDAKGE (86 aa)) is disordered. Over residues 217-248 (KTDEREDDRRNRRGPRSDRPAGDRRPPSRDGA) the composition is skewed to basic and acidic residues. The span at 257-282 (ADAGAAAPTDKPADGAAPAAADGPKA) shows a compositional bias: low complexity.

This sequence belongs to the universal ribosomal protein uS3 family. As to quaternary structure, part of the 30S ribosomal subunit. Forms a tight complex with proteins S10 and S14.

Binds the lower part of the 30S subunit head. Binds mRNA in the 70S ribosome, positioning it for translation. The sequence is that of Small ribosomal subunit protein uS3 from Methylibium petroleiphilum (strain ATCC BAA-1232 / LMG 22953 / PM1).